The primary structure comprises 249 residues: Chromosome segregation and cytokinesis defective protein 1 (249 aa).

Positions 12–48 (VVAMADTLETRVKDLLEEYKKKLREVALQTAKAESDR) form a coiled coil. Disordered stretches follow at residues 70–89 (PDDFYIESGEEEEEGEAAVA), 94–183 (LPSE…PEKP), and 208–249 (TTAT…GTSV). Residues 73-85 (FYIESGEEEEEGE) show a composition bias toward acidic residues. Residues 109 to 126 (QKTSIPIGQNSGRNTVQV) are compositionally biased toward polar residues. Residues 224–236 (SGAASKKAAAAAG) are compositionally biased toward low complexity.

Belongs to the borealin family. Highly divergent. Component of the CPC complex which consists of icp-1; csc-1; bir-1 and air-2. Within the complex interacts with Aurora B/air-2, bir-1 and icp-1.

Its subcellular location is the nucleus. It is found in the chromosome. The protein resides in the centromere. The protein localises to the cytoplasm. It localises to the cytoskeleton. Its subcellular location is the spindle. Component of the chromosomal passenger complex (CPC), a complex that acts as a key regulator of chromosome segregation and cytokinesis during mitosis. The CPC complex has essential functions at the centromere in ensuring correct chromosome alignment and segregation. In the complex, it may be required to direct the Aurora B/air-2 to centromeric DNA. This Caenorhabditis elegans protein is Chromosome segregation and cytokinesis defective protein 1 (csc-1).